The chain runs to 158 residues: GTP-dependent dephospho-CoA kinase (158 aa).

Positions 35, 36, 54, 56, 109, and 132 each coordinate GTP.

The protein belongs to the GTP-dependent DPCK family.

The catalysed reaction is 3'-dephospho-CoA + GTP = GDP + CoA + H(+). It functions in the pathway cofactor biosynthesis; coenzyme A biosynthesis. Functionally, catalyzes the GTP-dependent phosphorylation of the 3'-hydroxyl group of dephosphocoenzyme A to form coenzyme A (CoA). The polypeptide is GTP-dependent dephospho-CoA kinase (Methanococcus maripaludis (strain C7 / ATCC BAA-1331)).